Consider the following 366-residue polypeptide: Histidinol-phosphate aminotransferase 2 (366 aa).

Position 226 is an N6-(pyridoxal phosphate)lysine (Lys226).

This sequence belongs to the class-II pyridoxal-phosphate-dependent aminotransferase family. Histidinol-phosphate aminotransferase subfamily. As to quaternary structure, homodimer. The cofactor is pyridoxal 5'-phosphate.

It catalyses the reaction L-histidinol phosphate + 2-oxoglutarate = 3-(imidazol-4-yl)-2-oxopropyl phosphate + L-glutamate. Its pathway is amino-acid biosynthesis; L-histidine biosynthesis; L-histidine from 5-phospho-alpha-D-ribose 1-diphosphate: step 7/9. The sequence is that of Histidinol-phosphate aminotransferase 2 (hisC2) from Haemophilus influenzae (strain ATCC 51907 / DSM 11121 / KW20 / Rd).